Reading from the N-terminus, the 249-residue chain is Probable transcriptional regulatory protein Minf_0651 (249 aa).

The protein belongs to the TACO1 family.

The protein localises to the cytoplasm. This chain is Probable transcriptional regulatory protein Minf_0651, found in Methylacidiphilum infernorum (isolate V4) (Methylokorus infernorum (strain V4)).